Consider the following 146-residue polypeptide: Hemoglobin subunit beta-1/2 (146 aa).

V1 bears the N-acetylvaline mark. A Globin domain is found at 2–146 (HLTPDEKNAV…VATALAHKYH (145 aa)). At S44 the chain carries Phosphoserine. K59 bears the N6-acetyllysine mark. 2 residues coordinate heme b: H63 and H92. C93 carries the post-translational modification S-nitrosocysteine. K144 is subject to N6-acetyllysine.

It belongs to the globin family. As to quaternary structure, heterotetramer of two alpha chains and two beta chains. In terms of tissue distribution, red blood cells.

In terms of biological role, involved in oxygen transport from the lung to the various peripheral tissues. This Otolemur crassicaudatus (Brown greater galago) protein is Hemoglobin subunit beta-1/2 (HBB).